The chain runs to 823 residues: Sphingomyelin phosphodiesterase 4 (823 aa).

Residues serine 130 and serine 245 each carry the phosphoserine modification. Position 665 is a phosphothreonine (threonine 665). Phosphoserine is present on serine 749. Residues 776 to 796 (LLLLLMAFFVASLFCIGPLSC) traverse the membrane as a helical segment.

Mg(2+) serves as cofactor. Expressed in skeletal muscle (at protein level). As to expression, expressed in skeletal muscle but a lower levels than isoform 1 (at protein level).

It localises to the endoplasmic reticulum membrane. The protein resides in the golgi apparatus membrane. Its subcellular location is the nucleus envelope. The protein localises to the cell membrane. It is found in the sarcolemma. It carries out the reaction a sphingomyelin + H2O = phosphocholine + an N-acylsphing-4-enine + H(+). Activated by phosphatidylserine and tumor necrosis factor (TNF). Inhibited by scyphostatin. Its function is as follows. Catalyzes the hydrolysis of membrane sphingomyelin to form phosphorylcholine and ceramide. It has a relevant role in the homeostasis of membrane sphingolipids, thereby influencing membrane integrity, and endoplasmic reticulum organization and function. May sensitize cells to DNA damage-induced apoptosis. In skeletal muscle, mediates TNF-stimulated oxidant production. This chain is Sphingomyelin phosphodiesterase 4 (Smpd4), found in Mus musculus (Mouse).